A 338-amino-acid chain; its full sequence is Anthranilate phosphoribosyltransferase (338 aa).

5-phospho-alpha-D-ribose 1-diphosphate-binding positions include G81, 84-85, T89, 91-94, 109-117, and T121; these read GD, NIST, and KHGNRAQSS. G81 serves as a coordination point for anthranilate. S93 provides a ligand contact to Mg(2+). N112 contributes to the anthranilate binding site. R167 lines the anthranilate pocket. Mg(2+) is bound by residues D225 and E226.

Belongs to the anthranilate phosphoribosyltransferase family. As to quaternary structure, homodimer. Mg(2+) serves as cofactor.

The enzyme catalyses N-(5-phospho-beta-D-ribosyl)anthranilate + diphosphate = 5-phospho-alpha-D-ribose 1-diphosphate + anthranilate. The protein operates within amino-acid biosynthesis; L-tryptophan biosynthesis; L-tryptophan from chorismate: step 2/5. Functionally, catalyzes the transfer of the phosphoribosyl group of 5-phosphorylribose-1-pyrophosphate (PRPP) to anthranilate to yield N-(5'-phosphoribosyl)-anthranilate (PRA). The chain is Anthranilate phosphoribosyltransferase from Rhizobium rhizogenes (strain K84 / ATCC BAA-868) (Agrobacterium radiobacter).